The chain runs to 90 residues: Small ribosomal subunit protein uS17 (90 aa).

Belongs to the universal ribosomal protein uS17 family. Part of the 30S ribosomal subunit.

One of the primary rRNA binding proteins, it binds specifically to the 5'-end of 16S ribosomal RNA. The polypeptide is Small ribosomal subunit protein uS17 (Burkholderia thailandensis (strain ATCC 700388 / DSM 13276 / CCUG 48851 / CIP 106301 / E264)).